The following is a 222-amino-acid chain: Ribosomal RNA small subunit methyltransferase G (222 aa).

S-adenosyl-L-methionine contacts are provided by residues Gly82, Leu87, 132 to 133 (AE), and Arg150.

This sequence belongs to the methyltransferase superfamily. RNA methyltransferase RsmG family.

Its subcellular location is the cytoplasm. Its function is as follows. Specifically methylates the N7 position of guanine in position 518 of 16S rRNA. The sequence is that of Ribosomal RNA small subunit methyltransferase G from Corynebacterium jeikeium (strain K411).